The following is a 173-amino-acid chain: Small ribosomal subunit protein uS9 (173 aa).

Residues Ser-20–Arg-53 form a disordered region.

It belongs to the universal ribosomal protein uS9 family.

The chain is Small ribosomal subunit protein uS9 from Streptomyces avermitilis (strain ATCC 31267 / DSM 46492 / JCM 5070 / NBRC 14893 / NCIMB 12804 / NRRL 8165 / MA-4680).